The sequence spans 144 residues: Neuritin-B (144 aa).

An N-terminal signal peptide occupies residues 1 to 27; it reads MGLKLSGRYIFLVLAVHLAYLLQAVKA. Residue Ser114 is the site of GPI-anchor amidated serine attachment. A propeptide spans 115 to 144 (removed in mature form); the sequence is TGAPGPRLLFPAFLPLLIVFLSALLNWVLQ.

It belongs to the neuritin family.

Its subcellular location is the cell membrane. Modulates postsynaptic dendritic arbor elaboration and synaptic maturation. The sequence is that of Neuritin-B (nrn1-b) from Xenopus laevis (African clawed frog).